A 307-amino-acid chain; its full sequence is Glycerol-3-phosphate dehydrogenase [NAD(P)+] (307 aa).

NADPH-binding residues include tryptophan 14, arginine 34, arginine 35, and lysine 82. Sn-glycerol 3-phosphate contacts are provided by lysine 82 and glycine 110. Serine 114 lines the NADPH pocket. Lysine 165, aspartate 218, serine 228, arginine 229, and asparagine 230 together coordinate sn-glycerol 3-phosphate. Catalysis depends on lysine 165, which acts as the Proton acceptor. Arginine 229 provides a ligand contact to NADPH. Position 255 (glutamate 255) interacts with NADPH.

Belongs to the NAD-dependent glycerol-3-phosphate dehydrogenase family.

The protein localises to the cytoplasm. The catalysed reaction is sn-glycerol 3-phosphate + NAD(+) = dihydroxyacetone phosphate + NADH + H(+). The enzyme catalyses sn-glycerol 3-phosphate + NADP(+) = dihydroxyacetone phosphate + NADPH + H(+). It functions in the pathway membrane lipid metabolism; glycerophospholipid metabolism. Its function is as follows. Catalyzes the reduction of the glycolytic intermediate dihydroxyacetone phosphate (DHAP) to sn-glycerol 3-phosphate (G3P), the key precursor for phospholipid synthesis. The polypeptide is Glycerol-3-phosphate dehydrogenase [NAD(P)+] (Nostoc sp. (strain PCC 7120 / SAG 25.82 / UTEX 2576)).